The sequence spans 431 residues: Enolase (431 aa).

Residue glutamine 175 coordinates (2R)-2-phosphoglycerate. Residue glutamate 217 is the Proton donor of the active site. Residues aspartate 254, glutamate 295, and aspartate 322 each contribute to the Mg(2+) site. 4 residues coordinate (2R)-2-phosphoglycerate: lysine 347, arginine 376, serine 377, and lysine 398. The active-site Proton acceptor is lysine 347.

Belongs to the enolase family. The cofactor is Mg(2+).

It is found in the cytoplasm. The protein resides in the secreted. It localises to the cell surface. It carries out the reaction (2R)-2-phosphoglycerate = phosphoenolpyruvate + H2O. The protein operates within carbohydrate degradation; glycolysis; pyruvate from D-glyceraldehyde 3-phosphate: step 4/5. Catalyzes the reversible conversion of 2-phosphoglycerate (2-PG) into phosphoenolpyruvate (PEP). It is essential for the degradation of carbohydrates via glycolysis. This is Enolase from Anaplasma marginale (strain St. Maries).